Reading from the N-terminus, the 128-residue chain is Small ribosomal subunit protein uS9 (128 aa).

Over residues 97–113 the composition is skewed to basic and acidic residues; the sequence is RSEGFMTRDSRSVERKK. Residues 97–128 form a disordered region; that stretch reads RSEGFMTRDSRSVERKKPGQPKARRRFQFSKR. Residues 114–128 are compositionally biased toward basic residues; it reads PGQPKARRRFQFSKR.

The protein belongs to the universal ribosomal protein uS9 family.

The protein is Small ribosomal subunit protein uS9 of Phocaeicola vulgatus (strain ATCC 8482 / DSM 1447 / JCM 5826 / CCUG 4940 / NBRC 14291 / NCTC 11154) (Bacteroides vulgatus).